We begin with the raw amino-acid sequence, 103 residues long: Glutaredoxin-C1 (103 aa).

Residues 1–102 form the Glutaredoxin domain; that stretch reads MDRVNRLAAQ…PLLRNAGALW (102 aa). An intrachain disulfide couples C21 to C24.

This sequence belongs to the glutaredoxin family. CC-type subfamily.

The protein resides in the cytoplasm. In terms of biological role, has a glutathione-disulfide oxidoreductase activity in the presence of NADPH and glutathione reductase. Reduces low molecular weight disulfides and proteins. The sequence is that of Glutaredoxin-C1 (GRXC1) from Oryza sativa subsp. japonica (Rice).